The primary structure comprises 693 residues: Elongation factor G (693 aa).

Positions 8–282 (AKTRNIGIMA…AVIDYLPSPL (275 aa)) constitute a tr-type G domain. Residues 17–24 (AHVDAGKT), 81–85 (DTPGH), and 135–138 (NKMD) contribute to the GTP site.

This sequence belongs to the TRAFAC class translation factor GTPase superfamily. Classic translation factor GTPase family. EF-G/EF-2 subfamily.

The protein resides in the cytoplasm. Catalyzes the GTP-dependent ribosomal translocation step during translation elongation. During this step, the ribosome changes from the pre-translocational (PRE) to the post-translocational (POST) state as the newly formed A-site-bound peptidyl-tRNA and P-site-bound deacylated tRNA move to the P and E sites, respectively. Catalyzes the coordinated movement of the two tRNA molecules, the mRNA and conformational changes in the ribosome. The polypeptide is Elongation factor G (Streptococcus thermophilus (strain CNRZ 1066)).